The following is a 622-amino-acid chain: WD repeat-containing protein 70 (622 aa).

A compositionally biased stretch (basic and acidic residues) spans 36–55 (RTAVERSKQTLEAREKEEQL). The segment at 36-141 (RTAVERSKQT…DNPVKDIPDS (106 aa)) is disordered. A compositionally biased stretch (low complexity) spans 67–84 (SSSGQKKTKASGSSSGSE). Over residues 120 to 132 (SDDEDDEEHEDDD) the composition is skewed to acidic residues. WD repeat units lie at residues 148 to 187 (HGTK…ASLQ), 195 to 236 (CECH…ECVK), 249 to 289 (GHTA…KHKG), 298 to 337 (GKPV…HTKF), 344 to 383 (TPGT…NPLN), 387 to 434 (GLEN…KIYE), and 437 to 476 (VTEA…QRGA). Residues 508-533 (REPRQRSTRKQLEKDRLDPVKSHKPE) show a composition bias toward basic and acidic residues. Disordered regions lie at residues 508 to 549 (REPR…GTHG) and 602 to 622 (AEVD…KRKI). Residues 539 to 549 (PGRGGRVGTHG) show a composition bias toward gly residues. Over residues 604-614 (VDSDEEEPDNE) the composition is skewed to acidic residues.

This sequence belongs to the WD repeat GAD-1 family.

This Xenopus laevis (African clawed frog) protein is WD repeat-containing protein 70 (wdr70).